A 240-amino-acid polypeptide reads, in one-letter code: 2,3,4,5-tetrahydropyridine-2,6-dicarboxylate N-acetyltransferase (240 aa).

The protein belongs to the transferase hexapeptide repeat family. DapH subfamily.

The enzyme catalyses (S)-2,3,4,5-tetrahydrodipicolinate + acetyl-CoA + H2O = L-2-acetamido-6-oxoheptanedioate + CoA. The protein operates within amino-acid biosynthesis; L-lysine biosynthesis via DAP pathway; LL-2,6-diaminopimelate from (S)-tetrahydrodipicolinate (acetylase route): step 1/3. Its function is as follows. Catalyzes the transfer of an acetyl group from acetyl-CoA to tetrahydrodipicolinate. This chain is 2,3,4,5-tetrahydropyridine-2,6-dicarboxylate N-acetyltransferase, found in Bacillus cereus (strain G9842).